The chain runs to 509 residues: Bifunctional purine biosynthesis protein PurH (509 aa).

The region spanning 1-144 is the MGS-like domain; it reads MKRALISVSD…KNYAAVTVVV (144 aa).

It belongs to the PurH family.

It carries out the reaction (6R)-10-formyltetrahydrofolate + 5-amino-1-(5-phospho-beta-D-ribosyl)imidazole-4-carboxamide = 5-formamido-1-(5-phospho-D-ribosyl)imidazole-4-carboxamide + (6S)-5,6,7,8-tetrahydrofolate. It catalyses the reaction IMP + H2O = 5-formamido-1-(5-phospho-D-ribosyl)imidazole-4-carboxamide. The protein operates within purine metabolism; IMP biosynthesis via de novo pathway; 5-formamido-1-(5-phospho-D-ribosyl)imidazole-4-carboxamide from 5-amino-1-(5-phospho-D-ribosyl)imidazole-4-carboxamide (10-formyl THF route): step 1/1. It functions in the pathway purine metabolism; IMP biosynthesis via de novo pathway; IMP from 5-formamido-1-(5-phospho-D-ribosyl)imidazole-4-carboxamide: step 1/1. This Listeria monocytogenes serotype 4b (strain F2365) protein is Bifunctional purine biosynthesis protein PurH.